We begin with the raw amino-acid sequence, 362 residues long: Probable peptidyl-prolyl cis-trans isomerase C27F1.06c (362 aa).

The residue at position 69 (Ser69) is a Phosphoserine. The disordered stretch occupies residues 144–274 (DEFSSDEEEM…KVKGDGPAAK (131 aa)). Composition is skewed to acidic residues over residues 146–167 (FSSDEEEMDDISVTSSEEEEEE) and 175–189 (LNSDEEDAEQAEEEI). Position 177 is a phosphoserine (Ser177). Positions 190–218 (LEKPVPKDEVAEKHSKDKLKKEEKEKKTA) are enriched in basic and acidic residues. Residues 276 to 362 (KKRVSMRYIG…VFDVKLLAVN (87 aa)) enclose the PPIase FKBP-type domain.

Belongs to the FKBP-type PPIase family. FKBP3/4 subfamily.

The catalysed reaction is [protein]-peptidylproline (omega=180) = [protein]-peptidylproline (omega=0). In terms of biological role, PPIases accelerate the folding of proteins. It catalyzes the cis-trans isomerization of proline imidic peptide bonds in oligopeptides. This is Probable peptidyl-prolyl cis-trans isomerase C27F1.06c from Schizosaccharomyces pombe (strain 972 / ATCC 24843) (Fission yeast).